The following is a 484-amino-acid chain: tRNA sulfurtransferase (484 aa).

The 105-residue stretch at 63–167 (QAFGERLACI…RDNLYMVTKR (105 aa)) folds into the THUMP domain. ATP is bound by residues 185 to 186 (LI), Lys-267, Gly-289, and Gln-298. Cysteines 346 and 458 form a disulfide. One can recognise a Rhodanese domain in the interval 406–484 (IDTNQVVIDI…GYTNVKVYRP (79 aa)). Cys-458 functions as the Cysteine persulfide intermediate in the catalytic mechanism.

The protein belongs to the ThiI family.

It localises to the cytoplasm. It carries out the reaction [ThiI sulfur-carrier protein]-S-sulfanyl-L-cysteine + a uridine in tRNA + 2 reduced [2Fe-2S]-[ferredoxin] + ATP + H(+) = [ThiI sulfur-carrier protein]-L-cysteine + a 4-thiouridine in tRNA + 2 oxidized [2Fe-2S]-[ferredoxin] + AMP + diphosphate. The enzyme catalyses [ThiS sulfur-carrier protein]-C-terminal Gly-Gly-AMP + S-sulfanyl-L-cysteinyl-[cysteine desulfurase] + AH2 = [ThiS sulfur-carrier protein]-C-terminal-Gly-aminoethanethioate + L-cysteinyl-[cysteine desulfurase] + A + AMP + 2 H(+). It functions in the pathway cofactor biosynthesis; thiamine diphosphate biosynthesis. Functionally, catalyzes the ATP-dependent transfer of a sulfur to tRNA to produce 4-thiouridine in position 8 of tRNAs, which functions as a near-UV photosensor. Also catalyzes the transfer of sulfur to the sulfur carrier protein ThiS, forming ThiS-thiocarboxylate. This is a step in the synthesis of thiazole, in the thiamine biosynthesis pathway. The sulfur is donated as persulfide by IscS. This chain is tRNA sulfurtransferase, found in Shewanella baltica (strain OS155 / ATCC BAA-1091).